We begin with the raw amino-acid sequence, 417 residues long: Gamma-glutamyl phosphate reductase (417 aa).

Belongs to the gamma-glutamyl phosphate reductase family.

Its subcellular location is the cytoplasm. It catalyses the reaction L-glutamate 5-semialdehyde + phosphate + NADP(+) = L-glutamyl 5-phosphate + NADPH + H(+). The protein operates within amino-acid biosynthesis; L-proline biosynthesis; L-glutamate 5-semialdehyde from L-glutamate: step 2/2. Its function is as follows. Catalyzes the NADPH-dependent reduction of L-glutamate 5-phosphate into L-glutamate 5-semialdehyde and phosphate. The product spontaneously undergoes cyclization to form 1-pyrroline-5-carboxylate. The polypeptide is Gamma-glutamyl phosphate reductase (Haemophilus influenzae (strain PittGG)).